A 113-amino-acid polypeptide reads, in one-letter code: Signal peptidase complex subunit 1 (113 aa).

Topologically, residues 1-32 are cytoplasmic; sequence MDGMIAMLPAPLQQLSSHIDFQGQKVAERTYQ. The chain crosses the membrane as a helical span at residues 33 to 53; the sequence is VILTLAGIIGFFVGYSTQQLS. Topologically, residues 54–57 are lumenal; the sequence is YAMY. The helical transmembrane segment at 58-78 threads the bilayer; sequence TVMGAAVFTALIILPPWPFLF. The Cytoplasmic segment spans residues 79–113; sequence RKNPIVWQTPIEEQEASSSSDNEKKDKKKETKKTK. The interval 89–113 is disordered; the sequence is IEEQEASSSSDNEKKDKKKETKKTK.

Belongs to the SPCS1 family. As to quaternary structure, component of the signal peptidase complex (SPC) composed of a catalytic subunit sec-11 and three accessory subunits spcs-1, spcs-2 and spcs-3. The complex induces a local thinning of the ER membrane which is used to measure the length of the signal peptide (SP) h-region of protein substrates. This ensures the selectivity of the complex towards h-regions shorter than 18-20 amino acids.

It is found in the endoplasmic reticulum membrane. Functionally, component of the signal peptidase complex (SPC) which catalyzes the cleavage of N-terminal signal sequences from nascent proteins as they are translocated into the lumen of the endoplasmic reticulum. Dispensable for SPC enzymatic activity. The sequence is that of Signal peptidase complex subunit 1 from Caenorhabditis briggsae.